The chain runs to 182 residues: Ribulose bisphosphate carboxylase small subunit, chloroplastic (182 aa).

The transit peptide at 1–58 (MASSMISSATVATVSRATPAQATMVAPFTGLKSTAAFPATRKSNNDITSLASNGGRVQ) directs the protein to the chloroplast.

The protein belongs to the RuBisCO small chain family. Heterohexadecamer of 8 large and 8 small subunits.

It localises to the plastid. The protein resides in the chloroplast. Functionally, ruBisCO catalyzes two reactions: the carboxylation of D-ribulose 1,5-bisphosphate, the primary event in carbon dioxide fixation, as well as the oxidative fragmentation of the pentose substrate. Both reactions occur simultaneously and in competition at the same active site. Although the small subunit is not catalytic it is essential for maximal activity. The chain is Ribulose bisphosphate carboxylase small subunit, chloroplastic from Fagus crenata (Japanese beech).